Consider the following 43-residue polypeptide: Protein PsbN (43 aa).

Residues 4-24 (AIVLSISMAAVVVAITGISIY) traverse the membrane as a helical segment.

The protein belongs to the PsbN family.

The protein localises to the cellular thylakoid membrane. Its function is as follows. May play a role in photosystem I and II biogenesis. In Nostoc punctiforme (strain ATCC 29133 / PCC 73102), this protein is Protein PsbN.